The sequence spans 440 residues: Serine hydroxymethyltransferase (440 aa).

(6S)-5,6,7,8-tetrahydrofolate contacts are provided by residues L119 and 123 to 125 (GHL). At K228 the chain carries N6-(pyridoxal phosphate)lysine. Position 370-372 (370-372 (SPF)) interacts with (6S)-5,6,7,8-tetrahydrofolate.

Belongs to the SHMT family. As to quaternary structure, homodimer. The cofactor is pyridoxal 5'-phosphate.

The protein localises to the cytoplasm. It carries out the reaction (6R)-5,10-methylene-5,6,7,8-tetrahydrofolate + glycine + H2O = (6S)-5,6,7,8-tetrahydrofolate + L-serine. It participates in one-carbon metabolism; tetrahydrofolate interconversion. The protein operates within amino-acid biosynthesis; glycine biosynthesis; glycine from L-serine: step 1/1. Catalyzes the reversible interconversion of serine and glycine with tetrahydrofolate (THF) serving as the one-carbon carrier. This reaction serves as the major source of one-carbon groups required for the biosynthesis of purines, thymidylate, methionine, and other important biomolecules. Also exhibits THF-independent aldolase activity toward beta-hydroxyamino acids, producing glycine and aldehydes, via a retro-aldol mechanism. The polypeptide is Serine hydroxymethyltransferase (Chlorobaculum tepidum (strain ATCC 49652 / DSM 12025 / NBRC 103806 / TLS) (Chlorobium tepidum)).